Here is a 245-residue protein sequence, read N- to C-terminus: tRNA (guanine-N(7)-)-methyltransferase (245 aa).

Residues E69, E94, D121, and D144 each coordinate S-adenosyl-L-methionine. The active site involves D144. Substrate contacts are provided by residues K148, D180, and 217–220 (TKFE). Residues 200-225 (NLSSSGDYVPRPENRPKTKFERRGEG) are disordered. Residues 209-225 (PRPENRPKTKFERRGEG) are compositionally biased toward basic and acidic residues.

Belongs to the class I-like SAM-binding methyltransferase superfamily. TrmB family.

The catalysed reaction is guanosine(46) in tRNA + S-adenosyl-L-methionine = N(7)-methylguanosine(46) in tRNA + S-adenosyl-L-homocysteine. It functions in the pathway tRNA modification; N(7)-methylguanine-tRNA biosynthesis. Catalyzes the formation of N(7)-methylguanine at position 46 (m7G46) in tRNA. This chain is tRNA (guanine-N(7)-)-methyltransferase, found in Idiomarina loihiensis (strain ATCC BAA-735 / DSM 15497 / L2-TR).